A 217-amino-acid chain; its full sequence is Cytidylate kinase (217 aa).

G9 to S17 contacts ATP.

It belongs to the cytidylate kinase family. Type 1 subfamily.

The protein resides in the cytoplasm. The catalysed reaction is CMP + ATP = CDP + ADP. It carries out the reaction dCMP + ATP = dCDP + ADP. The sequence is that of Cytidylate kinase from Mycoplasma genitalium (strain ATCC 33530 / DSM 19775 / NCTC 10195 / G37) (Mycoplasmoides genitalium).